Here is a 419-residue protein sequence, read N- to C-terminus: Tyrosine--tRNA ligase 2 (419 aa).

Tyr34 is an L-tyrosine binding site. Residues 39-48 (PTGDSMHIGH) carry the 'HIGH' region motif. Tyr168 and Gln172 together coordinate L-tyrosine. The 'KMSKS' region motif lies at 230–234 (KFGKS). An ATP-binding site is contributed by Lys233. The region spanning 352–418 (KNIVEWLVDL…GKKNYSLVKL (67 aa)) is the S4 RNA-binding domain.

The protein belongs to the class-I aminoacyl-tRNA synthetase family. TyrS type 1 subfamily. In terms of assembly, homodimer.

The protein localises to the cytoplasm. It catalyses the reaction tRNA(Tyr) + L-tyrosine + ATP = L-tyrosyl-tRNA(Tyr) + AMP + diphosphate + H(+). Catalyzes the attachment of tyrosine to tRNA(Tyr) in a two-step reaction: tyrosine is first activated by ATP to form Tyr-AMP and then transferred to the acceptor end of tRNA(Tyr). In Bacillus cereus (strain ATCC 10987 / NRS 248), this protein is Tyrosine--tRNA ligase 2.